A 79-amino-acid chain; its full sequence is Small ribosomal subunit protein uS17 (79 aa).

The protein belongs to the universal ribosomal protein uS17 family. As to quaternary structure, part of the 30S ribosomal subunit.

In terms of biological role, one of the primary rRNA binding proteins, it binds specifically to the 5'-end of 16S ribosomal RNA. In Rhizobium leguminosarum bv. trifolii (strain WSM2304), this protein is Small ribosomal subunit protein uS17.